Reading from the N-terminus, the 103-residue chain is Acyl carrier protein homolog (103 aa).

The 85-residue stretch at 3 to 87 folds into the Carrier domain; sequence ELTSEIKKEI…ETLEKVVQTT (85 aa). The residue at position 45 (S45) is an O-(pantetheine 4'-phosphoryl)serine.

4'-phosphopantetheine is transferred from CoA to a specific serine of the apo-ACP-like protein.

It localises to the cytoplasm. Functionally, acyl carrier protein. In Clostridium acetobutylicum (strain ATCC 824 / DSM 792 / JCM 1419 / IAM 19013 / LMG 5710 / NBRC 13948 / NRRL B-527 / VKM B-1787 / 2291 / W), this protein is Acyl carrier protein homolog.